A 1143-amino-acid chain; its full sequence is Condensin-2 complex subunit G2 (1143 aa).

The residue at position 30 (S30) is a Phosphoserine. One copy of the HEAT repeat lies at 460–498 (LLPALRYSLHDNSEKVRVAFVDMLLKIKAVRAAKFWKIC). Phosphothreonine is present on residues T805 and T1119.

In terms of assembly, component of the condensin-2 complex, which contains the SMC2 and SMC4 heterodimer, and 3 non SMC subunits that probably regulate the complex: NCAPH2, NCAPD3 and NCAPG2.

The protein resides in the nucleus. Regulatory subunit of the condensin-2 complex, a complex which establishes mitotic chromosome architecture and is involved in physical rigidity of the chromatid axis. In Homo sapiens (Human), this protein is Condensin-2 complex subunit G2 (NCAPG2).